Here is a 147-residue protein sequence, read N- to C-terminus: Hemoglobin subunit beta (147 aa).

In terms of domain architecture, Globin spans 2-147 (HWEDAEKQYI…ISHSLGREYH (146 aa)). Heme b contacts are provided by His63 and His92.

Belongs to the globin family. In terms of assembly, heterotetramer of two alpha chains and two beta chains. Red blood cells.

Functionally, involved in oxygen transport from the lung to the various peripheral tissues. The chain is Hemoglobin subunit beta (HBB) from Lepidosiren paradoxus (South American lungfish).